We begin with the raw amino-acid sequence, 976 residues long: MELQAARACFALLWGCALAAAAAAQGKEVVLLDFAAAGGELGWLTHPYGKGWDLMQNIMNDMPIYMYSVCNVMSGDQDNWLRTNWVYRGEAERIFIELKFTVRDCNSFPGGASSCKETFNLYYAESDLDYGTNFQKRLFTKIDTIAPDEITVSSDFEARHVKLNVEERSVGPLTRKGFYLAFQDIGACVALLSVRVYYKKCPELLQGLAHFPETIAGSDAPSLATVAGTCVDHAVVPPGGEEPRMHCAVDGEWLVPIGQCLCQAGYEKVEDACQACSPGFFKFEASESPCLECPEHTLPSPEGATSCECEEGFFRAPQDPASMPCTRPPSAPHYLTAVGMGAKVELRWTPPQDSGGREDIVYSVTCEQCWPESGECGPCEASVRYSEPPHGLTRTSVTVSDLEPHMNYTFTVEARNGVSGLVTSRSFRTASVSINQTEPPKVRLEGRSTTSLSVSWSIPPPQQSRVWKYEVTYRKKGDSNSYNVRRTEGFSVTLDDLAPDTTYLVQVQALTQEGQGAGSKVHEFQTLSPEGSGNLAVIGGVAVGVVLLLVLAGVGFFIHRRRKNQRARQSPEDVYFSKSEQLKPLKTYVDPHTYEDPNQAVLKFTTEIHPSCVTRQKVIGAGEFGEVYKGMLKTSSGKKEVPVAIKTLKAGYTEKQRVDFLGEAGIMGQFSHHNIIRLEGVISKYKPMMIITEYMENGALDKFLREKDGEFSVLQLVGMLRGIAAGMKYLANMNYVHRDLAARNILVNSNLVCKVSDFGLSRVLEDDPEATYTTSGGKIPIRWTAPEAISYRKFTSASDVWSFGIVMWEVMTYGERPYWELSNHEVMKAINDGFRLPTPMDCPSAIYQLMMQCWQQERARRPKFADIVSILDKLIRAPDSLKTLADFDPRVSIRLPSTSGSEGVPFRTVSEWLESIKMQQYTEHFMAAGYTAIEKVVQMTNDDIKRIGVRLPGHQKRIAYSLLGLKDQVNTVGIPI.

Residues 1-23 (MELQAARACFALLWGCALAAAAA) form the signal peptide. Residues 1–206 (MELQAARACF…YYKKCPELLQ (206 aa)) are mediates interaction with CLDN4. The Extracellular portion of the chain corresponds to 24–537 (AQGKEVVLLD…SPEGSGNLAV (514 aa)). The Eph LBD domain maps to 28-206 (EVVLLDFAAA…YYKKCPELLQ (179 aa)). 2 disulfide bridges follow: C70–C188 and C105–C115. In terms of domain architecture, Fibronectin type-III 1 spans 328-432 (PPSAPHYLTA…TSRSFRTASV (105 aa)). N-linked (GlcNAc...) asparagine glycans are attached at residues N407 and N435. In terms of domain architecture, Fibronectin type-III 2 spans 438–529 (EPPKVRLEGR…KVHEFQTLSP (92 aa)). The chain crosses the membrane as a helical span at residues 538–558 (IGGVAVGVVLLLVLAGVGFFI). The Cytoplasmic portion of the chain corresponds to 559-976 (HRRRKNQRAR…DQVNTVGIPI (418 aa)). Residue S570 is modified to Phosphoserine. Y575 carries the post-translational modification Phosphotyrosine. S579 carries the phosphoserine modification. Position 588 is a phosphotyrosine; by autocatalysis (Y588). Residue Y594 is modified to Phosphotyrosine. The segment at 606 to 906 (TEIHPSCVTR…STSGSEGVPF (301 aa)) is mediates interaction with ARHGEF16 and ELMO2. Residues 613 to 875 (VTRQKVIGAG…DIVSILDKLI (263 aa)) form the Protein kinase domain. Residue 619–627 (IGAGEFGEV) participates in ATP binding. Position 628 is a phosphotyrosine (Y628). Position 646 (K646) interacts with ATP. T647 carries the post-translational modification Phosphothreonine. Phosphotyrosine; by autocatalysis is present on Y735. The active-site Proton acceptor is D739. Y772 carries the phosphotyrosine modification. Residues S869 and S892 each carry the phosphoserine modification. The tract at residues 886-976 (DFDPRVSIRL…DQVNTVGIPI (91 aa)) is negatively regulates interaction with ARHGEF16. Residue S897 is modified to Phosphoserine; by PKB/AKT1, RPS6KA1, RPS6KA3 AND PKA. Position 901 is a phosphoserine (S901). Residues 904–968 (VPFRTVSEWL…AYSLLGLKDQ (65 aa)) form the SAM domain. The residue at position 921 (Y921) is a Phosphotyrosine; by autocatalysis. The residue at position 930 (Y930) is a Phosphotyrosine. Residues 974–976 (IPI) carry the PDZ-binding motif.

Belongs to the protein kinase superfamily. Tyr protein kinase family. Ephrin receptor subfamily. As to quaternary structure, homodimer. Interacts with SLA. Interacts (phosphorylated form) with VAV2, VAV3 and PI3-kinase p85 subunit (PIK3R1, PIK3R2 or PIK3R3); critical for the EFNA1-induced activation of RAC1 which stimulates cell migration. Interacts with INPPL1; regulates activated EPHA2 endocytosis and degradation. Interacts (inactivated form) with PTK2/FAK1 and interacts (EFNA1 ligand-activated form) with PTPN11; regulates integrin-mediated adhesion. Interacts with ARHGEF16, DOCK4 and ELMO2; mediates ligand-independent activation of RAC1 which stimulates cell migration. Interacts with CLDN4; phosphorylates CLDN4 and may regulate tight junctions. Interacts with ACP1. Interacts (via SAM domain) with ANKS1A (via SAM domain). Interacts with CEMIP. Interacts with NCK1; may regulate EPHA2 activity in cell migration and adhesion. Interacts with TIMD4. (Microbial infection) Interacts with human herpes virus 8/HHV-8 glycoprotein L/gL and glycoprotein H/gH heterodimer; this interaction triggers EPHA2 phosphorylation and endocytosis, allowing virus entry. In terms of assembly, (Microbial infection) Interacts with human cytomegalovirus (HCMV) glycoprotein L/gL and glycoprotein H/gH heterodimer. As to quaternary structure, (Microbial infection) Interacts with Epstein-Barr virus/HHV-4 glycoprotein L/gL and glycoprotein H/gH heterodimer; this interaction facilitates virus internalization and fusion. Post-translationally, autophosphorylates. Phosphorylated on tyrosine upon binding and activation by EFNA1. Phosphorylated residues Tyr-588 and Tyr-594 are required for binding VAV2 and VAV3 while phosphorylated residues Tyr-735 and Tyr-930 are required for binding PI3-kinase p85 subunit (PIK3R1, PIK3R2 or PIK3R3). These phosphorylated residues are critical for recruitment of VAV2 and VAV3 and PI3-kinase p85 subunit which transduce downstream signaling to activate RAC1 GTPase and cell migration. Dephosphorylation of Tyr-930 by PTPRF prevents the interaction of EPHA2 with NCK1. Phosphorylated at Ser-897 by PKB; serum-induced phosphorylation which targets EPHA2 to the cell leading edge and stimulates cell migration. Phosphorylation by PKB is inhibited by EFNA1-activated EPHA2 which regulates PKB activity via a reciprocal regulatory loop. Phosphorylated at Ser-897 in response to TNF by RPS6KA1 and RPS6KA3; RPS6KA-EPHA2 signaling pathway controls cell migration. Phosphorylated at Ser-897 by PKA; blocks cell retraction induced by EPHA2 kinase activity. Dephosphorylated by ACP1. Ubiquitinated by CHIP/STUB1. Ubiquitination is regulated by the HSP90 chaperone and regulates the receptor stability and activity through proteasomal degradation. ANKS1A prevents ubiquitination and degradation. Expressed in brain and glioma tissue and glioma cell lines (at protein level). Expressed most highly in tissues that contain a high proportion of epithelial cells, e.g. skin, intestine, lung, and ovary.

The protein localises to the cell membrane. The protein resides in the cell projection. Its subcellular location is the ruffle membrane. It is found in the lamellipodium membrane. It localises to the cell junction. The protein localises to the focal adhesion. The catalysed reaction is L-tyrosyl-[protein] + ATP = O-phospho-L-tyrosyl-[protein] + ADP + H(+). Functionally, receptor tyrosine kinase which binds promiscuously membrane-bound ephrin-A family ligands residing on adjacent cells, leading to contact-dependent bidirectional signaling into neighboring cells. The signaling pathway downstream of the receptor is referred to as forward signaling while the signaling pathway downstream of the ephrin ligand is referred to as reverse signaling. Activated by the ligand ephrin-A1/EFNA1 regulates migration, integrin-mediated adhesion, proliferation and differentiation of cells. Regulates cell adhesion and differentiation through DSG1/desmoglein-1 and inhibition of the ERK1/ERK2 (MAPK3/MAPK1, respectively) signaling pathway. May also participate in UV radiation-induced apoptosis and have a ligand-independent stimulatory effect on chemotactic cell migration. During development, may function in distinctive aspects of pattern formation and subsequently in development of several fetal tissues. Involved for instance in angiogenesis, in early hindbrain development and epithelial proliferation and branching morphogenesis during mammary gland development. Engaged by the ligand ephrin-A5/EFNA5 may regulate lens fiber cells shape and interactions and be important for lens transparency development and maintenance. With ephrin-A2/EFNA2 may play a role in bone remodeling through regulation of osteoclastogenesis and osteoblastogenesis. (Microbial infection) Acts as a receptor for hepatitis C virus (HCV) in hepatocytes and facilitates its cell entry. Mediates HCV entry by promoting the formation of the CD81-CLDN1 receptor complexes that are essential for HCV entry and by enhancing membrane fusion of cells expressing HCV envelope glycoproteins. In terms of biological role, acts as a receptor for human cytomegalovirus (HCMV) to mediate viral entry and fusion in glioblastoma cells. The polypeptide is Ephrin type-A receptor 2 (EPHA2) (Homo sapiens (Human)).